Reading from the N-terminus, the 256-residue chain is tRNA (guanine-N(7)-)-methyltransferase (256 aa).

Residues 1–11 are compositionally biased toward polar residues; that stretch reads MHPQDASTEQT. Residues 1–35 form a disordered region; that stretch reads MHPQDASTEQTPVDDDQVESSQPVHAPEDVAHPRR. S-adenosyl-L-methionine contacts are provided by Glu-85, Glu-110, Asp-137, and Asp-160. Asp-160 is a catalytic residue. Substrate is bound at residue Lys-164. The segment at 166–171 is interaction with RNA; sequence RHNKRR. Substrate-binding positions include Asp-196 and 234-237; that span reads TKFE.

It belongs to the class I-like SAM-binding methyltransferase superfamily. TrmB family.

The catalysed reaction is guanosine(46) in tRNA + S-adenosyl-L-methionine = N(7)-methylguanosine(46) in tRNA + S-adenosyl-L-homocysteine. The protein operates within tRNA modification; N(7)-methylguanine-tRNA biosynthesis. Its function is as follows. Catalyzes the formation of N(7)-methylguanine at position 46 (m7G46) in tRNA. This chain is tRNA (guanine-N(7)-)-methyltransferase, found in Cupriavidus pinatubonensis (strain JMP 134 / LMG 1197) (Cupriavidus necator (strain JMP 134)).